Here is a 218-residue protein sequence, read N- to C-terminus: Small ribosomal subunit protein uS5 (218 aa).

Polar residues predominate over residues 1-10; that stretch reads MTQATNQTPG. Residues 1 to 63 are disordered; it reads MTQATNQTPG…GRDERDSEWQ (63 aa). Residues 11 to 25 are compositionally biased toward low complexity; sequence QDVPGAADVPAAAEG. Positions 31–63 are enriched in basic and acidic residues; that stretch reads GERRGGGGGRGGDRRGRGDRRGRGRDERDSEWQ. The S5 DRBM domain occupies 62–125; that stretch reads WQERVIQIRR…ADGKKHLVKV (64 aa).

This sequence belongs to the universal ribosomal protein uS5 family. As to quaternary structure, part of the 30S ribosomal subunit. Contacts proteins S4 and S8.

With S4 and S12 plays an important role in translational accuracy. Its function is as follows. Located at the back of the 30S subunit body where it stabilizes the conformation of the head with respect to the body. The protein is Small ribosomal subunit protein uS5 of Synechococcus sp. (strain RCC307).